Here is a 165-residue protein sequence, read N- to C-terminus: Chorismate pyruvate-lyase (165 aa).

Substrate contacts are provided by Met-35, Arg-77, Leu-115, and Glu-156.

Belongs to the UbiC family. As to quaternary structure, monomer.

It localises to the cytoplasm. The enzyme catalyses chorismate = 4-hydroxybenzoate + pyruvate. The protein operates within cofactor biosynthesis; ubiquinone biosynthesis. Functionally, removes the pyruvyl group from chorismate, with concomitant aromatization of the ring, to provide 4-hydroxybenzoate (4HB) for the ubiquinone pathway. This chain is Chorismate pyruvate-lyase, found in Escherichia coli (strain K12 / MC4100 / BW2952).